Here is a 219-residue protein sequence, read N- to C-terminus: Adenylate kinase (219 aa).

10–15 (GAGKGT) lines the ATP pocket. The interval 30–59 (STGDMLRAAIREGTELGLKAKSVMESGGLV) is NMP. AMP-binding positions include Thr-31, Arg-36, 57 to 59 (GLV), 85 to 88 (GFPR), and Gln-92. An LID region spans residues 122–159 (GRRQHPASGRVYHIEYNPPKVEGKDDVTGEELVQRPDD). Residues Arg-123 and 132 to 133 (VY) contribute to the ATP site. AMP is bound by residues Arg-156 and Arg-167. ATP is bound at residue Arg-202.

The protein belongs to the adenylate kinase family. In terms of assembly, monomer.

It is found in the cytoplasm. It catalyses the reaction AMP + ATP = 2 ADP. Its pathway is purine metabolism; AMP biosynthesis via salvage pathway; AMP from ADP: step 1/1. Catalyzes the reversible transfer of the terminal phosphate group between ATP and AMP. Plays an important role in cellular energy homeostasis and in adenine nucleotide metabolism. The sequence is that of Adenylate kinase from Acinetobacter baylyi (strain ATCC 33305 / BD413 / ADP1).